The sequence spans 218 residues: Pyridoxine/pyridoxamine 5'-phosphate oxidase (218 aa).

Substrate is bound by residues 14–17 (RREY) and K72. FMN contacts are provided by residues 67–72 (RIVLLK), 82–83 (YT), R88, K89, and Q111. Substrate is bound by residues Y129, R133, and S137. FMN-binding positions include 146 to 147 (QS) and W191. 197–199 (RLH) provides a ligand contact to substrate. R201 serves as a coordination point for FMN.

It belongs to the pyridoxamine 5'-phosphate oxidase family. Homodimer. The cofactor is FMN.

It catalyses the reaction pyridoxamine 5'-phosphate + O2 + H2O = pyridoxal 5'-phosphate + H2O2 + NH4(+). It carries out the reaction pyridoxine 5'-phosphate + O2 = pyridoxal 5'-phosphate + H2O2. It participates in cofactor metabolism; pyridoxal 5'-phosphate salvage; pyridoxal 5'-phosphate from pyridoxamine 5'-phosphate: step 1/1. Its pathway is cofactor metabolism; pyridoxal 5'-phosphate salvage; pyridoxal 5'-phosphate from pyridoxine 5'-phosphate: step 1/1. Catalyzes the oxidation of either pyridoxine 5'-phosphate (PNP) or pyridoxamine 5'-phosphate (PMP) into pyridoxal 5'-phosphate (PLP). The sequence is that of Pyridoxine/pyridoxamine 5'-phosphate oxidase from Escherichia coli (strain 55989 / EAEC).